Consider the following 327-residue polypeptide: Malate dehydrogenase (327 aa).

12-18 provides a ligand contact to NAD(+); sequence GAAGQIG. Residues arginine 93 and arginine 99 each coordinate substrate. NAD(+) contacts are provided by residues asparagine 106, glutamine 113, and 130-132; that span reads VGN. Substrate contacts are provided by asparagine 132 and arginine 163. The active-site Proton acceptor is histidine 188.

Belongs to the LDH/MDH superfamily. MDH type 2 family.

It carries out the reaction (S)-malate + NAD(+) = oxaloacetate + NADH + H(+). Catalyzes the reversible oxidation of malate to oxaloacetate. The polypeptide is Malate dehydrogenase (Cupriavidus pinatubonensis (strain JMP 134 / LMG 1197) (Cupriavidus necator (strain JMP 134))).